Reading from the N-terminus, the 851-residue chain is M-phase phosphoprotein 8 (851 aa).

The disordered stretch occupies residues 21–54 (NIGRSPEVEGGGAAGEEKDAATKGTVAVGDSEED). A phosphoserine mark is found at serine 51, serine 85, and serine 136. The Chromo domain occupies 59–118 (FEVERILDMKCEGGKNLYKVRWKGYTSDDDTWEPEVHLEDCKEVLLEFRKKVAENKAKAV). Positions 80 to 87 (WKGYTSDD) are histone H3K9me3 binding. Positions 133–174 (EADSDIDQQGDTKEDTSPRKKKKKIKYKEDKSPDDLRKKRAK) are disordered. The residue at position 144 (threonine 144) is a Phosphothreonine. A phosphoserine; by CDK1 mark is found at serine 149 and serine 164. Residues 159–169 (YKEDKSPDDLR) show a composition bias toward basic and acidic residues. Residues serine 188, serine 263, serine 267, and serine 274 each carry the phosphoserine modification. Positions 240–302 (REDVKDNRKT…KTGQDTVQES (63 aa)) are disordered. Residues 269 to 278 (TLEDESEDFL) show a composition bias toward acidic residues. Positions 279-295 (SDNKEKQNVRTAKDKTG) are enriched in basic and acidic residues. Serine 313 bears the Phosphoserine mark. The segment at 315–428 (EEAGTRVRRK…DKEEKARKEP (114 aa)) is disordered. Residues 329–364 (RKFEEPKEIKKLENTNNFLERKMIPKKQRNQDKGRS) show a composition bias toward basic and acidic residues. Residue threonine 379 is modified to Phosphothreonine; by CDK1. A phosphoserine mark is found at serine 386 and serine 394. Residues 401-428 (EKERKNEPKEKYQKRYDFDKEEKARKEP) are compositionally biased toward basic and acidic residues. Threonine 447 carries the phosphothreonine modification. ANK repeat units follow at residues 591-620 (TGMT…KVNG), 624-653 (NGTT…FVNV), 657-686 (NGET…DCNI), and 690-719 (HQNS…TLSR).

In terms of assembly, homodimer. Interacts (via chromo domain) with histone H3K9me3. Has the highest affinity for H3K9me3, and lesser affinity for H3K9me2 and H3K9me1. Component of the HUSH complex; at least composed of TASOR, PPHLN1 and MPHOSPH8. Interacts with DNMT3, EHMT1 and SETDB1. Interacts with MORC2; the interaction associateS MORC2 with the HUSH complex which recruits MORC2 to heterochromatic loci. Interacts with ZNF638; leading to recruitment of the HUSH complex to unintegrated retroviral DNA. Interacts with TASOR. Phosphorylated in M (mitotic) phase. Phosphorylation by CDK1 promotes dissociation from chromatin.

The protein localises to the nucleus. It localises to the chromosome. Heterochromatin component that specifically recognizes and binds methylated 'Lys-9' of histone H3 (H3K9me) and promotes recruitment of proteins that mediate epigenetic repression. Mediates recruitment of the HUSH complex to H3K9me3 sites: the HUSH complex is recruited to genomic loci rich in H3K9me3 and is required to maintain transcriptional silencing by promoting recruitment of SETDB1, a histone methyltransferase that mediates further deposition of H3K9me3, as well as MORC2. Binds H3K9me and promotes DNA methylation by recruiting DNMT3A to target CpG sites; these can be situated within the coding region of the gene. Mediates down-regulation of CDH1 expression. Also represses L1 retrotransposons in collaboration with MORC2 and, probably, SETDB1, the silencing is dependent of repressive epigenetic modifications, such as H3K9me3 mark. Silencing events often occur within introns of transcriptionally active genes, and lead to the down-regulation of host gene expression. The HUSH complex is also involved in the silencing of unintegrated retroviral DNA by being recruited by ZNF638: some part of the retroviral DNA formed immediately after infection remains unintegrated in the host genome and is transcriptionally repressed. The sequence is that of M-phase phosphoprotein 8 from Rattus norvegicus (Rat).